The primary structure comprises 517 residues: tRNA-2-methylthio-N(6)-dimethylallyladenosine synthase (517 aa).

An MTTase N-terminal domain is found at 29 to 146 (RTYQVRTYGC…LPTLLERARH (118 aa)). [4Fe-4S] cluster contacts are provided by cysteine 38, cysteine 75, cysteine 109, cysteine 183, cysteine 187, and cysteine 190. Residues 169–405 (RESAYAAWVS…VELQESISLQ (237 aa)) form the Radical SAM core domain. A TRAM domain is found at 408–475 (QALVGQTVEL…PHHLIADAGV (68 aa)).

The protein belongs to the methylthiotransferase family. MiaB subfamily. As to quaternary structure, monomer. [4Fe-4S] cluster serves as cofactor.

It is found in the cytoplasm. It carries out the reaction N(6)-dimethylallyladenosine(37) in tRNA + (sulfur carrier)-SH + AH2 + 2 S-adenosyl-L-methionine = 2-methylsulfanyl-N(6)-dimethylallyladenosine(37) in tRNA + (sulfur carrier)-H + 5'-deoxyadenosine + L-methionine + A + S-adenosyl-L-homocysteine + 2 H(+). Its function is as follows. Catalyzes the methylthiolation of N6-(dimethylallyl)adenosine (i(6)A), leading to the formation of 2-methylthio-N6-(dimethylallyl)adenosine (ms(2)i(6)A) at position 37 in tRNAs that read codons beginning with uridine. The protein is tRNA-2-methylthio-N(6)-dimethylallyladenosine synthase of Mycolicibacterium paratuberculosis (strain ATCC BAA-968 / K-10) (Mycobacterium paratuberculosis).